Consider the following 103-residue polypeptide: Large ribosomal subunit protein bL21 (103 aa).

It belongs to the bacterial ribosomal protein bL21 family. As to quaternary structure, part of the 50S ribosomal subunit. Contacts protein L20.

In terms of biological role, this protein binds to 23S rRNA in the presence of protein L20. The protein is Large ribosomal subunit protein bL21 of Colwellia psychrerythraea (strain 34H / ATCC BAA-681) (Vibrio psychroerythus).